Here is a 439-residue protein sequence, read N- to C-terminus: GTPase Der (439 aa).

EngA-type G domains lie at 4 to 168 and 177 to 352; these read PIVA…KDDE and INIA…DNYT. GTP contacts are provided by residues 10-17, 57-61, 120-123, 183-190, 230-234, and 295-298; these read GRPNVGKS, DTGGI, NKID, GKPNVGKS, DTAGL, and NKWD. In terms of domain architecture, KH-like spans 353–437; sequence KRVKTGVLND…GIKLEFRERK (85 aa).

Belongs to the TRAFAC class TrmE-Era-EngA-EngB-Septin-like GTPase superfamily. EngA (Der) GTPase family. As to quaternary structure, associates with the 50S ribosomal subunit.

Functionally, GTPase that plays an essential role in the late steps of ribosome biogenesis. The chain is GTPase Der from Clostridium botulinum (strain Kyoto / Type A2).